A 248-amino-acid chain; its full sequence is Octanoyltransferase (248 aa).

The 186-residue stretch at 53 to 238 folds into the BPL/LPL catalytic domain; the sequence is ADTGDEIWVV…NLDGASAAAD (186 aa). Residues 93-100, 165-167, and 178-180 contribute to the substrate site; these read RGGQITYH, ALG, and GLS. Cys-196 functions as the Acyl-thioester intermediate in the catalytic mechanism.

It belongs to the LipB family.

It is found in the cytoplasm. It carries out the reaction octanoyl-[ACP] + L-lysyl-[protein] = N(6)-octanoyl-L-lysyl-[protein] + holo-[ACP] + H(+). It participates in protein modification; protein lipoylation via endogenous pathway; protein N(6)-(lipoyl)lysine from octanoyl-[acyl-carrier-protein]: step 1/2. Functionally, catalyzes the transfer of endogenously produced octanoic acid from octanoyl-acyl-carrier-protein onto the lipoyl domains of lipoate-dependent enzymes. Lipoyl-ACP can also act as a substrate although octanoyl-ACP is likely to be the physiological substrate. The polypeptide is Octanoyltransferase (Burkholderia orbicola (strain MC0-3)).